Here is a 358-residue protein sequence, read N- to C-terminus: Aminomethyltransferase (358 aa).

Belongs to the GcvT family. As to quaternary structure, the glycine cleavage system is composed of four proteins: P, T, L and H.

It catalyses the reaction N(6)-[(R)-S(8)-aminomethyldihydrolipoyl]-L-lysyl-[protein] + (6S)-5,6,7,8-tetrahydrofolate = N(6)-[(R)-dihydrolipoyl]-L-lysyl-[protein] + (6R)-5,10-methylene-5,6,7,8-tetrahydrofolate + NH4(+). Functionally, the glycine cleavage system catalyzes the degradation of glycine. The chain is Aminomethyltransferase from Francisella tularensis subsp. tularensis (strain FSC 198).